The sequence spans 384 residues: 8-amino-7-oxononanoate synthase (384 aa).

Arg-23 lines the substrate pocket. A pyridoxal 5'-phosphate-binding site is contributed by 110–111 (GF). Position 135 (His-135) interacts with substrate. Positions 179, 206, and 232 each coordinate pyridoxal 5'-phosphate. An N6-(pyridoxal phosphate)lysine modification is found at Lys-235. A substrate-binding site is contributed by Thr-348.

It belongs to the class-II pyridoxal-phosphate-dependent aminotransferase family. BioF subfamily. In terms of assembly, homodimer. Pyridoxal 5'-phosphate serves as cofactor.

It catalyses the reaction 6-carboxyhexanoyl-[ACP] + L-alanine + H(+) = (8S)-8-amino-7-oxononanoate + holo-[ACP] + CO2. It functions in the pathway cofactor biosynthesis; biotin biosynthesis. Functionally, catalyzes the decarboxylative condensation of pimeloyl-[acyl-carrier protein] and L-alanine to produce 8-amino-7-oxononanoate (AON), [acyl-carrier protein], and carbon dioxide. This is 8-amino-7-oxononanoate synthase from Vibrio cholerae serotype O1 (strain ATCC 39315 / El Tor Inaba N16961).